The primary structure comprises 90 residues: Acylphosphatase (90 aa).

One can recognise an Acylphosphatase-like domain in the interval 3–90; that stretch reads RVLIKLTGKV…DIYLDFSIVR (88 aa). Residues arginine 18 and asparagine 36 contribute to the active site.

It belongs to the acylphosphatase family.

It carries out the reaction an acyl phosphate + H2O = a carboxylate + phosphate + H(+). This Shewanella oneidensis (strain ATCC 700550 / JCM 31522 / CIP 106686 / LMG 19005 / NCIMB 14063 / MR-1) protein is Acylphosphatase (acyP).